The chain runs to 361 residues: Large-conductance mechanosensitive channel MscMJLR (361 aa).

A run of 5 helical transmembrane segments spans residues 20–40 (ILSLISIILFIVIGKYANALI), 65–85 (LPVAIAIILSGFYFGVNFLYL), 89–109 (LKTAVNEGILTAFILCVVVFF), 137–157 (IVVLTKKLVRLVVWVVGLLLI), and 177–197 (LAVALASQNLVSNLIAGLIIL).

It belongs to the MscS (TC 1.A.23) family.

The protein localises to the cell membrane. Functionally, large-conductance mechanosensitive channel that opens in response to stretch forces in the membrane lipid bilayer. Selective for cations. Rectifies with voltage. The sequence is that of Large-conductance mechanosensitive channel MscMJLR from Methanocaldococcus jannaschii (strain ATCC 43067 / DSM 2661 / JAL-1 / JCM 10045 / NBRC 100440) (Methanococcus jannaschii).